A 486-amino-acid chain; its full sequence is Ribosomal RNA small subunit methyltransferase F (486 aa).

S-adenosyl-L-methionine-binding positions include 124–130, E148, D175, and D193; that span reads ASAPGSK. The active-site Nucleophile is C246.

The protein belongs to the class I-like SAM-binding methyltransferase superfamily. RsmB/NOP family.

The protein localises to the cytoplasm. It carries out the reaction cytidine(1407) in 16S rRNA + S-adenosyl-L-methionine = 5-methylcytidine(1407) in 16S rRNA + S-adenosyl-L-homocysteine + H(+). Its function is as follows. Specifically methylates the cytosine at position 1407 (m5C1407) of 16S rRNA. The chain is Ribosomal RNA small subunit methyltransferase F from Shewanella baltica (strain OS185).